The sequence spans 427 residues: MTAIIDIAAREILDSRGNPTVEVDVTLEDGSHGRAAVPSGASTGAHEAVELRDGDKSRYGGKGVLKAIENVNRDIFEALSGLEAEDQGRIDEIMISLDGTPNKSKLGANAILGVSLAVAKAAADASALPLYRYVGGVQAHVLPVPMMNIINGGVHADNPIDFQEFMILPVGAPSIAEAVRWGSEVFQLLKSSLKKAGHNTNVGDEGGFAPNLPSAEAALDFCVQAIEAAGFKPGVDIFLGLDCAATEFFKDGAYVYSGEGVTRSPEEQANYLAKLSASYPIASIEDGMSEDDWAGWKAVTELIGSKIQLVGDDLFVTNVTRLEEGIKKGIANSILVKVNQIGSLTETLAAVDMAQRAGYTAVMSHRSGETEDSTIADLAVATNCGQIKTGSLARSDRTAKYNQLIRIEEELGSQARYAGLKALKALA.

Gln163 serves as a coordination point for (2R)-2-phosphoglycerate. Glu205 functions as the Proton donor in the catalytic mechanism. Mg(2+)-binding residues include Asp242, Glu285, and Asp312. Lys337, Arg366, Ser367, and Lys388 together coordinate (2R)-2-phosphoglycerate. Lys337 (proton acceptor) is an active-site residue.

It belongs to the enolase family. Mg(2+) serves as cofactor.

Its subcellular location is the cytoplasm. The protein localises to the secreted. It localises to the cell surface. The catalysed reaction is (2R)-2-phosphoglycerate = phosphoenolpyruvate + H2O. It functions in the pathway carbohydrate degradation; glycolysis; pyruvate from D-glyceraldehyde 3-phosphate: step 4/5. Its function is as follows. Catalyzes the reversible conversion of 2-phosphoglycerate (2-PG) into phosphoenolpyruvate (PEP). It is essential for the degradation of carbohydrates via glycolysis. The chain is Enolase from Methylocella silvestris (strain DSM 15510 / CIP 108128 / LMG 27833 / NCIMB 13906 / BL2).